Here is a 179-residue protein sequence, read N- to C-terminus: Large ribosomal subunit protein uL5 (179 aa).

The protein belongs to the universal ribosomal protein uL5 family. Part of the 50S ribosomal subunit; part of the 5S rRNA/L5/L18/L25 subcomplex. Contacts the 5S rRNA and the P site tRNA. Forms a bridge to the 30S subunit in the 70S ribosome.

This is one of the proteins that bind and probably mediate the attachment of the 5S RNA into the large ribosomal subunit, where it forms part of the central protuberance. In the 70S ribosome it contacts protein S13 of the 30S subunit (bridge B1b), connecting the 2 subunits; this bridge is implicated in subunit movement. Contacts the P site tRNA; the 5S rRNA and some of its associated proteins might help stabilize positioning of ribosome-bound tRNAs. The chain is Large ribosomal subunit protein uL5 from Trichlorobacter lovleyi (strain ATCC BAA-1151 / DSM 17278 / SZ) (Geobacter lovleyi).